Here is a 229-residue protein sequence, read N- to C-terminus: Matrix protein (229 aa).

A compositionally biased stretch (low complexity) spans 1–12 (MSSFKKILGLSS). The tract at residues 1–35 (MSSFKKILGLSSKSHKKSKKMGLPPPYDESCPMET) is disordered. A dynamin binding motif is present at residues 2–4 (SSF). Positions 24–27 (PPPY) match the PPXY motif motif. The PTAP/PSAP motif motif lies at 37–40 (PSAP).

This sequence belongs to the vesiculoviruses matrix protein family. In terms of assembly, homomultimer. Interacts with viral nucleocapsid; this interaction contributes to the virion assembly. Interacts with the viral envelope glycoprotein; this interaction contributes to the virion assembly. Interacts with host RAE1-NUP98 complex. Interacts with host NEDD4 and TSG101. Interacts with host dynamin. Interacts with host NDUFAF4; the interaction inhibits viral propagation and is independent of interferon activation. Interacts with host GTF2H5; the interaction may inhibit host transcription. Post-translationally, phosphorylated by host.

The protein localises to the virion. It is found in the host endomembrane system. The protein resides in the host nucleus membrane. Its subcellular location is the host nucleus. It localises to the host cytoplasm. In terms of biological role, forms a double layer around the helical nucleocapsid, the inner matrix layer binding to the N helix and the outer matrix layer binding to the envelope glycoprotein. Plays a major role in assembly and budding of virion, by recruiting cellular partners of the ESCRT complexes that play a key role in releasing the budding particle from the host membrane. Condensates the ribonucleocapsid core during virus assembly. Inhibits the host mRNA nuclear export thereby inducing the shut off of cellular transcription and preventing the interferon signaling and the establishment of antiviral state in infected cells. This shutoff presumably inhibits interferon signaling and thus establishment of antiviral state in virus infected cells. Induces cell-rounding, cytoskeleton disorganization and apoptosis in infected cell. Inhibits host transcription, possibly through interaction with host DNA repair factor IIH/TFIIH GTF2H5 subunit. The polypeptide is Matrix protein (M) (Aedes (Bovine)).